The sequence spans 348 residues: Fe-S cluster assembly protein DRE2 (348 aa).

Residues 1-185 (MSGEKSSLLL…KKPESPRASV (185 aa)) are N-terminal SAM-like domain. Disordered regions lie at residues 128 to 148 (QTAP…SKSL) and 162 to 213 (KKAE…TASK). Residues 186–241 (VAEDLDDGDELDGMNEDDSNSDELTASKSKFFDDVAGQDSADSIDEDDLVDDAEKS) are linker. Residues 188–206 (EDLDDGDELDGMNEDDSNS) are compositionally biased toward acidic residues. Cys248, Cys259, Cys262, and Cys264 together coordinate [2Fe-2S] cluster. Residues 248–264 (CGKTKTRRRKACKDCTC) are fe-S binding site A. Cys311, Cys314, Cys322, and Cys325 together coordinate [4Fe-4S] cluster. 2 consecutive short sequence motifs (cx2C motif) follow at residues 311-314 (CGSC) and 322-325 (CSGC). The tract at residues 311–325 (CGSCSLGDAFRCSGC) is fe-S binding site B.

This sequence belongs to the anamorsin family. Monomer. Interacts with TAH18. Interacts with MIA40. The cofactor is [2Fe-2S] cluster. [4Fe-4S] cluster is required as a cofactor.

It is found in the cytoplasm. The protein localises to the mitochondrion intermembrane space. In terms of biological role, component of the cytosolic iron-sulfur (Fe-S) protein assembly (CIA) machinery required for the maturation of extramitochondrial Fe-S proteins. Part of an electron transfer chain functioning in an early step of cytosolic Fe-S biogenesis, facilitating the de novo assembly of a [4Fe-4S] cluster on the scaffold complex CFD1-NBP35. Electrons are transferred to DRE2 from NADPH via the FAD- and FMN-containing protein TAH18. TAH18-DRE2 are also required for the assembly of the diferric tyrosyl radical cofactor of ribonucleotide reductase (RNR), probably by providing electrons for reduction during radical cofactor maturation in the catalytic small subunit RNR2. The chain is Fe-S cluster assembly protein DRE2 from Lachancea thermotolerans (strain ATCC 56472 / CBS 6340 / NRRL Y-8284) (Yeast).